Reading from the N-terminus, the 252-residue chain is Protein BTG3 (252 aa).

The segment at 138 to 162 (VTSDYHSGSSSSDEDTSKEVEVKPS) is disordered.

This sequence belongs to the BTG family. In terms of tissue distribution, highly expressed in the brain.

Functionally, overexpression impairs serum-induced cell cycle progression from the G0/G1 to S phase. The sequence is that of Protein BTG3 from Rattus norvegicus (Rat).